Reading from the N-terminus, the 113-residue chain is Protein INCREASED RESISTANCE TO MYZUS PERSICAE 1 (113 aa).

An FLZ-type zinc finger spans residues 56–100 (DFLKTCSLCNRSLCHHRDIYMYRGNNAFCSLECREKQIKLDEKKA).

The protein belongs to the FLZ family. In terms of assembly, interacts with KIN10 and KIN11 via its FLZ-type zinc finger domain. Interacts with KINB3 via its N-terminal part. Interacts with GEBP.

It is found in the nucleus. The protein localises to the cytoplasm. May act as an adapter to facilitate the interaction of SnRK1 complex with effector proteins, conferring tissue- and stimulus-type specific differences in the SnRK1 regulation pathway. The chain is Protein INCREASED RESISTANCE TO MYZUS PERSICAE 1 from Arabidopsis thaliana (Mouse-ear cress).